The chain runs to 208 residues: Component of Sp100-rs (208 aa).

An HSR domain is found at 6 to 121 (GSPRMSTEQE…LRRSFECGAK (116 aa)).

This is Component of Sp100-rs (Csprs) from Mus musculus (Mouse).